A 463-amino-acid chain; its full sequence is Asparagine--tRNA ligase (463 aa).

The protein belongs to the class-II aminoacyl-tRNA synthetase family. In terms of assembly, homodimer.

The protein resides in the cytoplasm. The enzyme catalyses tRNA(Asn) + L-asparagine + ATP = L-asparaginyl-tRNA(Asn) + AMP + diphosphate + H(+). The sequence is that of Asparagine--tRNA ligase from Alkaliphilus metalliredigens (strain QYMF).